Reading from the N-terminus, the 588-residue chain is Juvenile hormone esterase (588 aa).

A signal peptide spans 1–23; the sequence is MKFPKNLFLVLFYTSWKFCDVCA. Residues Asn79 and Asn83 are each glycosylated (N-linked (GlcNAc...) asparagine). A disulfide bridge links Cys91 with Cys109. The Acyl-ester intermediate role is filled by Ser214. An N-linked (GlcNAc...) asparagine glycan is attached at Asn257. A disulfide bond links Cys268 and Cys281. Glu350 functions as the Charge relay system in the catalytic mechanism. 3 N-linked (GlcNAc...) asparagine glycosylation sites follow: Asn389, Asn396, and Asn472. The active-site Charge relay system is the His479.

This sequence belongs to the type-B carboxylesterase/lipase family.

Its subcellular location is the secreted. The enzyme catalyses juvenile hormone III + H2O = juvenile hormone III carboxylate + methanol + H(+). Inhibited by 3-octylthio-1,1,1-trifluoro-2-propanone (OTFP), a specific inhibitor of juvenile hormone esterase (JHE), but not by diisopropyl fluorophosphate (DFP), a serine enzyme inhibitor. Its function is as follows. May function as a juvenile hormone (JH)-specific degradation enzyme in vivo decreasing JH activity. Hydrolyzes JH III in vitro. Hydrolyzes effectively also methyl hepthylthioacetothioate (HEPTAT), a synthetic substrate. Of the general esterase substrates, it has preference for 2-naphthyl acetate (2-NA) and shows a weak activity for 1-NA and 4-nitrophenylacetate (4-NPA). This Tribolium castaneum (Red flour beetle) protein is Juvenile hormone esterase.